The following is a 361-amino-acid chain: MERAAAGPLGMEMPIMHDGDRYELVKEIGSGNFGVARLMRNRASGDLVAVKYIDRGEKIDENVQREIINHRSLRHPNIIRFKEVILTPTHLAIVMEYASGGELFERICSAGRFSEDEARFFFQQLISGVSYCHSMQVCHRDLKLENTLLDGSTAPRLKICDFGYSKSSVLHSQPKSTVGTPAYIAPEVLLKKEYDGKIADVWSCGVTLYVMLVGAYPFEDPEDPKNFRKTIQKILGVQYSIPDYVHISPECRDLITRIFVGNPASRITMPEIKNHPWFMKNIPADLMDDGMVSNQYEEPDQPMQNMNEIMQILAEATIPAAGTSGINQFLTDSLDLDDDMEDMDSDLDLDIESSGEIVYAM.

Positions 22–278 (YELVKEIGSG…MPEIKNHPWF (257 aa)) constitute a Protein kinase domain. Residues 28–36 (IGSGNFGVA) and lysine 51 each bind ATP. Aspartate 141 serves as the catalytic Proton acceptor.

Belongs to the protein kinase superfamily. Ser/Thr protein kinase family. As to quaternary structure, interacts with BZIP46. May be phosphorylated. Expressed in leaf sheaths and roots. Expressed in shoots of young seedlings.

The protein resides in the cytoplasm. Its subcellular location is the nucleus. The catalysed reaction is L-seryl-[protein] + ATP = O-phospho-L-seryl-[protein] + ADP + H(+). The enzyme catalyses L-threonyl-[protein] + ATP = O-phospho-L-threonyl-[protein] + ADP + H(+). With respect to regulation, activated by hyperosmotic stress and abscisic acid (ABA). Functionally, may play a role in signal transduction of hyperosmotic response. Can phosphorylate BZIP46 in vitro. The protein is Serine/threonine-protein kinase SAPK9 (SAPK9) of Oryza sativa subsp. japonica (Rice).